A 78-amino-acid chain; its full sequence is Small acidic protein 2 (78 aa).

Expressed in siliques and anthers.

In terms of biological role, mediates responses to the synthetic auxin 2,4-dichlorophenoxyacetic acid (2,4-D). Not involved in the response to indole-3-acetic acid (IAA). May interact with RUB modification-related components and may regulate the culling-ring ubiquitin E3 ligase complex (CRL) activity. The polypeptide is Small acidic protein 2 (SMAP2) (Arabidopsis thaliana (Mouse-ear cress)).